A 655-amino-acid polypeptide reads, in one-letter code: Potassium voltage-gated channel subfamily A member 4 (655 aa).

Over Met-1–Ser-306 the chain is Cytoplasmic. The disordered stretch occupies residues Gln-24–Ser-153. Low complexity predominate over residues Ser-36–Ala-50. Residues Gly-81–Thr-90 are compositionally biased toward basic and acidic residues. The segment covering Glu-91–Gln-100 has biased composition (basic residues). Ser-123 is subject to Phosphoserine. The span at Ser-123–Glu-138 shows a compositional bias: acidic residues. Over residues Gly-139–Asp-150 the composition is skewed to basic and acidic residues. Residues Pro-307 to Leu-328 form a helical membrane-spanning segment. Over Glu-329–Pro-372 the chain is Extracellular. Asn-354 is a glycosylation site (N-linked (GlcNAc...) asparagine). Residues Phe-373 to Ala-394 form a helical membrane-spanning segment. The Cytoplasmic portion of the chain corresponds to Cys-395–Ile-405. A helical membrane pass occupies residues Met-406–Ala-426. Topologically, residues Gln-427–Ser-441 are extracellular. Residues Phe-442 to His-462 form a helical; Voltage-sensor membrane-spanning segment. Residues Ser-463 to Met-477 are Cytoplasmic-facing. The segment at Lys-464–Met-477 is S4-S5 linker. The chain crosses the membrane as a helical span at residues Arg-478 to Tyr-499. The Extracellular portion of the chain corresponds to Phe-500–Ile-513. Positions Pro-514–Thr-525 form an intramembrane region, helical. The short motif at Thr-526–Asp-531 is the Selectivity filter element. Residues Thr-526 to Lys-533 lie within the membrane without spanning it. The Extracellular segment spans residues Pro-534 to Lys-540. A helical transmembrane segment spans residues Ile-541–Tyr-569. Topologically, residues His-570–Val-655 are cytoplasmic. A Phosphoserine; by PKA modification is found at Ser-601. Positions Cys-631 to Lys-642 are enriched in basic and acidic residues. Residues Cys-631–Val-655 form a disordered region. The short motif at Thr-653–Val-655 is the PDZ-binding element.

It belongs to the potassium channel family. A (Shaker) (TC 1.A.1.2) subfamily. Kv1.4/KCNA4 sub-subfamily. Homotetramer and heterotetramer of potassium channel proteins. Interacts with KCNAB1 and KCNAB2. Interacts with DLG1, DLG2 and DLG4 via their PDZ domains. Interacts with SIGMAR1. Part of a complex containing KCNA1, KCNAB1 and LGI1. Detected in a complex with KCNA1. Interacts with KCNA2. Interacts (via cytoplasmic N-terminal domain) with KCNRG. In terms of processing, N-glycosylated. Detected in brain (at protein level). Heart and brain.

The protein localises to the cell membrane. It localises to the cell projection. Its subcellular location is the axon. It carries out the reaction K(+)(in) = K(+)(out). Functionally, voltage-gated potassium channel that mediates transmembrane potassium transport in excitable membranes. Forms tetrameric potassium-selective channels through which potassium ions pass in accordance with their electrochemical gradient. The channel alternates between opened and closed conformations in response to the voltage difference across the membrane. Can form functional homotetrameric channels and heterotetrameric channels that contain variable proportions of KCNA1, KCNA2, KCNA4, KCNA5, and possibly other family members as well; channel properties depend on the type of alpha subunits that are part of the channel. Channel properties are modulated by cytoplasmic beta subunits that regulate the subcellular location of the alpha subunits and promote rapid inactivation. In vivo, membranes probably contain a mixture of heteromeric potassium channel complexes, making it difficult to assign currents observed in intact tissues to any particular potassium channel family member. Homotetrameric KCNA4 forms a potassium channel that opens in response to membrane depolarization, followed by rapid spontaneous channel closure. Likewise, a heterotetrameric channel formed by KCNA1 and KCNA4 shows rapid inactivation. This Rattus norvegicus (Rat) protein is Potassium voltage-gated channel subfamily A member 4 (Kcna4).